Reading from the N-terminus, the 160-residue chain is Small ribosomal subunit protein uS7 (160 aa).

This sequence belongs to the universal ribosomal protein uS7 family. Part of the 30S ribosomal subunit. Contacts proteins S9 and S11.

Its function is as follows. One of the primary rRNA binding proteins, it binds directly to 16S rRNA where it nucleates assembly of the head domain of the 30S subunit. Is located at the subunit interface close to the decoding center, probably blocks exit of the E-site tRNA. The chain is Small ribosomal subunit protein uS7 from Rickettsia rickettsii (strain Iowa).